A 717-amino-acid chain; its full sequence is Pentatricopeptide repeat-containing protein At1g53600, mitochondrial (717 aa).

The transit peptide at 1-47 directs the protein to the mitochondrion; it reads MVMRPISNKGLIYRHNICLRCNSTLAVSNHEPITQKTRNFLETTTTS. 17 PPR repeats span residues 49-79, 80-110, 111-142, 143-173, 176-206, 207-241, 242-272, 274-308, 309-339, 340-374, 375-401, 402-436, 437-471, 472-502, 503-537, 538-568, and 574-604; these read AIFQCNSQISKHARNGNLQEAEAIFRQMSNR, SIVSWIAMISAYAENGKMSKAWQVFDEMPVR, VTTSYNAMITAMIKNKCDLGKAYELFCDIPEK, NAVSYATMITGFVRAGRFDEAEFLYAETPVK, DSVASNVLLSGYLRAGKWNEAVRVFQGMAVK, EVVSCSSMVHGYCKMGRIVDARSLFDRMTERNVIT, WTAMIDGYFKAGFFEDGFGLFLRMRQEGDVK, NSNTLAVMFKACRDFVRYREGSQIHGLVSRMPLEF, DLFLGNSLMSMYSKLGYMGEAKAVFGVMKNK, DSVSWNSLITGLVQRKQISEAYELFEKMPGKDMVS, WTDMIKGFSGKGEISKCVELFGMMPEK, DNITWTAMISAFVSNGYYEEALCWFHKMLQKEVCP, NSYTFSSVLSATASLADLIEGLQIHGRVVKMNIVN, DLSVQNSLVSMYCKCGNTNDAYKIFSCISEP, NIVSYNTMISGYSYNGFGKKALKLFSMLESSGKEP, NGVTFLALLSACVHVGYVDLGWKYFKSMKSS, and GPDHYACMVDLLGRSGLLDDASNLISTMPCK. A type E motif region spans residues 609–684; sequence VWGSLLSASK…DPGSSWIILK (76 aa). The type E(+) motif stretch occupies residues 685-715; the sequence is GEVHNFLAGDESQLNLEEIGFTLKMIRKEME.

The protein belongs to the PPR family. PCMP-E subfamily.

Its subcellular location is the mitochondrion. This Arabidopsis thaliana (Mouse-ear cress) protein is Pentatricopeptide repeat-containing protein At1g53600, mitochondrial (PCMP-E63).